The following is a 57-amino-acid chain: Granulin-1 (57 aa).

Intrachain disulfides connect C4–C16 and C10–C26.

This sequence belongs to the granulin family. Granulins are disulfide bridged. Ubiquitous.

Its subcellular location is the secreted. Granulins have possible cytokine-like activity. They may play a role in inflammation, wound repair, and tissue remodeling. In Cyprinus carpio (Common carp), this protein is Granulin-1.